The sequence spans 273 residues: Putative expansin-B2 (273 aa).

A signal peptide spans 1-29 (MTILVVDRYYMLMNLLFALTCLLLNLTHC). N36 carries N-linked (GlcNAc...) asparagine glycosylation. In terms of domain architecture, Expansin-like EG45 spans 65-173 (GGACGYGNAV…KKVECNYIGK (109 aa)). 3 disulfide bridges follow: C68/C97, C100/C168, and C105/C111. One can recognise an Expansin-like CBD domain in the interval 186–269 (NSFAVLVAYV…NWQPGAIYKS (84 aa)).

Belongs to the expansin family. Expansin B subfamily.

The protein resides in the secreted. The protein localises to the cell wall. It localises to the membrane. May cause loosening and extension of plant cell walls by disrupting non-covalent bonding between cellulose microfibrils and matrix glucans. No enzymatic activity has been found. The sequence is that of Putative expansin-B2 (EXPB2) from Arabidopsis thaliana (Mouse-ear cress).